A 387-amino-acid polypeptide reads, in one-letter code: Patatin group A-3 (387 aa).

The first 23 residues, 1 to 23, serve as a signal peptide directing secretion; sequence MATTKSFLILIVMILATTSSTFA. Positions 32–230 constitute a PNPLA domain; that stretch reads LSIDGGGVKG…TVADPALLSV (199 aa). Residues 36–41 carry the GXGXXG motif; sequence GGGVKG. A GXSXG motif is present at residues 75-79; it reads GTSTG. Residue S77 is the Nucleophile of the active site. Residue N115 is glycosylated (N-linked (GlcNAc...) asparagine). The active-site Proton acceptor is D216. The DGA/G motif lies at 216–218; sequence DGA. Residues 361–385 adopt a coiled-coil conformation; sequence ETYEEALKRFAKLLSDRKKLRANKA.

This sequence belongs to the patatin family. As to expression, tuber and stolon.

The protein resides in the vacuole. Its function is as follows. Probable lipolytic acyl hydrolase (LAH), an activity which is thought to be involved in the response of tubers to pathogens. The sequence is that of Patatin group A-3 from Solanum tuberosum (Potato).